The chain runs to 142 residues: Large ribosomal subunit protein uL13 (142 aa).

Belongs to the universal ribosomal protein uL13 family. As to quaternary structure, part of the 50S ribosomal subunit.

Its function is as follows. This protein is one of the early assembly proteins of the 50S ribosomal subunit, although it is not seen to bind rRNA by itself. It is important during the early stages of 50S assembly. The chain is Large ribosomal subunit protein uL13 from Coxiella burnetii (strain CbuG_Q212) (Coxiella burnetii (strain Q212)).